Consider the following 122-residue polypeptide: Large ribosomal subunit protein uL14 (122 aa).

The protein belongs to the universal ribosomal protein uL14 family. In terms of assembly, part of the 50S ribosomal subunit. Forms a cluster with proteins L3 and L19. In the 70S ribosome, L14 and L19 interact and together make contacts with the 16S rRNA in bridges B5 and B8.

Binds to 23S rRNA. Forms part of two intersubunit bridges in the 70S ribosome. This chain is Large ribosomal subunit protein uL14, found in Xanthomonas axonopodis pv. citri (strain 306).